We begin with the raw amino-acid sequence, 224 residues long: DNA repair and recombination protein RadB (224 aa).

This sequence belongs to the eukaryotic RecA-like protein family. RadB subfamily.

Functionally, involved in DNA repair and in homologous recombination. May regulate the cleavage reactions of the branch-structured DNA. Has a very weak ATPase activity that is not stimulated by DNA. Binds DNA but does not promote DNA strands exchange. The sequence is that of DNA repair and recombination protein RadB from Thermococcus onnurineus (strain NA1).